The chain runs to 118 residues: Large ribosomal subunit protein bL20 (118 aa).

The protein belongs to the bacterial ribosomal protein bL20 family.

Its function is as follows. Binds directly to 23S ribosomal RNA and is necessary for the in vitro assembly process of the 50S ribosomal subunit. It is not involved in the protein synthesizing functions of that subunit. This chain is Large ribosomal subunit protein bL20, found in Yersinia pseudotuberculosis serotype O:1b (strain IP 31758).